The sequence spans 246 residues: Aquaporin AqpM (246 aa).

Over 1 to 11 (MVSLTKRCIAE) the chain is Cytoplasmic. Residues 12-32 (FIGTFILVFFGAGSAAVTLMI) form a helical membrane-spanning segment. The Extracellular segment spans residues 33–55 (ASGGTSPNPFNIGIGLLGGLGDW). The helical transmembrane segment at 56 to 76 (VAIGLAFGFAIAASIYALGNI) threads the bilayer. The Cytoplasmic portion of the chain corresponds to 77–103 (SGCHINPAVTIGLWSVKKFPGREVVPY). Positions 82–84 (NPA) match the NPA 1 motif. A helical membrane pass occupies residues 104 to 124 (IIAQLLGAAFGSFIFLQCAGI). Residues 125–145 (GAATVGGLGATAPFPGISYWQ) lie on the Extracellular side of the membrane. A helical transmembrane segment spans residues 146-166 (AMLAEVVGTFLLMITIMGIAV). Residues 167 to 172 (DERAPK) are Cytoplasmic-facing. The chain crosses the membrane as a helical span at residues 173-193 (GFAGIIIGLTVAGIITTLGNI). At 194-217 (SGSSLNPARTFGPYLNDMIFAGTN) the chain is on the extracellular side. Positions 199–201 (NPA) match the NPA 2 motif. The helical transmembrane segment at 218 to 238 (LWNYYPIYVIGPIVGAVLAAL) threads the bilayer. Residues 239-246 (TYQYLTSE) lie on the Cytoplasmic side of the membrane.

Belongs to the MIP/aquaporin (TC 1.A.8) family. In terms of assembly, homotetramer.

It localises to the cell membrane. Functionally, channel that permits osmotically driven movement of water in both directions. It mediates rapid entry or exit of water in response to abrupt changes in osmolarity. Also exhibits a transient but reproducible increase in the initial glycerol flux. This is Aquaporin AqpM (aqpM) from Methanothermobacter marburgensis (strain ATCC BAA-927 / DSM 2133 / JCM 14651 / NBRC 100331 / OCM 82 / Marburg) (Methanobacterium thermoautotrophicum).